A 386-amino-acid polypeptide reads, in one-letter code: Cytochrome b (386 aa).

4 helical membrane-spanning segments follow: residues Phe-32–Met-52, Trp-76–Gly-98, Thr-113–Val-133, and Phe-179–Ile-199. Residues His-82 and His-96 each contribute to the heme b site. 2 residues coordinate heme b: His-183 and His-197. His-202 is a binding site for a ubiquinone. 4 helical membrane-spanning segments follow: residues Phe-226–Leu-246, Thr-290–Asp-310, Leu-322–Ala-342, and Phe-349–Pro-369.

Belongs to the cytochrome b family. Fungal cytochrome b-c1 complex contains 10 subunits; 3 respiratory subunits, 2 core proteins and 5 low-molecular weight proteins. Cytochrome b-c1 complex is a homodimer. Heme b is required as a cofactor.

Its subcellular location is the mitochondrion inner membrane. Functionally, component of the ubiquinol-cytochrome c reductase complex (complex III or cytochrome b-c1 complex) that is part of the mitochondrial respiratory chain. The b-c1 complex mediates electron transfer from ubiquinol to cytochrome c. Contributes to the generation of a proton gradient across the mitochondrial membrane that is then used for ATP synthesis. The protein is Cytochrome b (COB) of Trichophyton rubrum (Athlete's foot fungus).